A 143-amino-acid polypeptide reads, in one-letter code: Hemoglobin subunit alpha-1 (143 aa).

S2 is subject to N-acetylserine. The Globin domain maps to 2–143 (SLTAKDKDTV…LSRALAEKYR (142 aa)). H60 contributes to the O2 binding site. Position 89 (H89) interacts with heme b.

It belongs to the globin family. In terms of assembly, hb1 is a heterotetramer of two alpha-1 chains and two beta-1 chains. As to expression, red blood cells.

In terms of biological role, involved in oxygen transport from gills to the various peripheral tissues. The sequence is that of Hemoglobin subunit alpha-1 (hba1) from Anarhichas minor (Arctic spotted wolffish).